The primary structure comprises 146 residues: VHLTPEEKTAVTTLWGKVNVDEVGGEALGRLLVVYPWTQRFFDSFGDLSSPDAVMGNPKVKAHGKKVLGAFSDGLNHLDNLKGTFAQLSELHCDKLHVDPENFKLLGNVLVCVLAHHFGKEFTPQVQAAYQKVVAGVANALAHKYH.

Valine 1 is subject to N-acetylvaline. One can recognise a Globin domain in the interval histidine 2 to histidine 146. Threonine 12 is modified (phosphothreonine). A Phosphoserine modification is found at serine 44. Residue lysine 59 is modified to N6-acetyllysine. Histidine 63 lines the heme b pocket. N6-acetyllysine is present on lysine 82. Histidine 92 provides a ligand contact to heme b. The residue at position 93 (cysteine 93) is an S-nitrosocysteine. Residue lysine 144 is modified to N6-acetyllysine.

This sequence belongs to the globin family. In terms of assembly, heterotetramer of two alpha chains and two beta chains. In terms of tissue distribution, red blood cells.

Functionally, involved in oxygen transport from the lung to the various peripheral tissues. This chain is Hemoglobin subunit beta (HBB), found in Mandrillus sphinx (Mandrill).